Reading from the N-terminus, the 223-residue chain is MEFKKFFKKRLWNNNSSLVQLLGLCPILAMTTNTINAIGLGITTTFVLTITNSIISILKNFIPKDIRIPIYMIIVSSTVTCIEMLLHAYQFNLYQSLGVFIPLIVTNCIVVGRADCIAYKSSFVISFLDGMSIGLGSTFAMFVIGSIREILGNGTFLFGANKIFNVLDHSFFFTFIDKNSTIILAMLPSGGFLVLGFVIAFKNYLDLGKKNCLKCFHSCKLKK.

A run of 7 helical transmembrane segments spans residues 17 to 37 (SLVQ…TINA), 38 to 58 (IGLG…ISIL), 68 to 88 (IPIY…LLHA), 91 to 111 (FNLY…CIVV), 124 to 144 (VISF…MFVI), 156 to 176 (FLFG…FTFI), and 181 to 201 (TIIL…VIAF).

This sequence belongs to the NqrDE/RnfAE family. The complex is composed of six subunits: RnfA, RnfB, RnfC, RnfD, RnfE and RnfG.

The protein localises to the cell inner membrane. Its function is as follows. Part of a membrane-bound complex that couples electron transfer with translocation of ions across the membrane. This Buchnera aphidicola subsp. Schizaphis graminum (strain Sg) protein is Ion-translocating oxidoreductase complex subunit E.